A 242-amino-acid chain; its full sequence is Probable septum site-determining protein MinC (242 aa).

This sequence belongs to the MinC family. Interacts with MinD and FtsZ.

Its function is as follows. Cell division inhibitor that blocks the formation of polar Z ring septums. Rapidly oscillates between the poles of the cell to destabilize FtsZ filaments that have formed before they mature into polar Z rings. Prevents FtsZ polymerization. The polypeptide is Probable septum site-determining protein MinC (Brucella anthropi (strain ATCC 49188 / DSM 6882 / CCUG 24695 / JCM 21032 / LMG 3331 / NBRC 15819 / NCTC 12168 / Alc 37) (Ochrobactrum anthropi)).